Consider the following 65-residue polypeptide: Large ribosomal subunit protein bL35 (65 aa).

The segment at 1 to 29 is disordered; that stretch reads MPKMKTHSGAKKRFKLTGSGKVKRQQANR.

It belongs to the bacterial ribosomal protein bL35 family.

The protein is Large ribosomal subunit protein bL35 of Kocuria rhizophila (strain ATCC 9341 / DSM 348 / NBRC 103217 / DC2201).